The chain runs to 184 residues: UPF0398 protein BAA_1648 (184 aa).

Belongs to the UPF0398 family.

The protein is UPF0398 protein BAA_1648 of Bacillus anthracis (strain A0248).